A 365-amino-acid polypeptide reads, in one-letter code: Pyruvate dehydrogenase E1 component subunit beta, mitochondrial (365 aa).

The transit peptide at M1 to L24 directs the protein to the mitochondrion. E85 provides a ligand contact to thiamine diphosphate. K(+) contacts are provided by I138, A186, I187, and D189.

It depends on thiamine diphosphate as a cofactor. In terms of tissue distribution, expressed in salivary glands (at protein level).

The protein resides in the mitochondrion matrix. It catalyses the reaction N(6)-[(R)-lipoyl]-L-lysyl-[protein] + pyruvate + H(+) = N(6)-[(R)-S(8)-acetyldihydrolipoyl]-L-lysyl-[protein] + CO2. In terms of biological role, the pyruvate dehydrogenase complex catalyzes the overall conversion of pyruvate to acetyl-CoA and CO(2). Might play a role in regulating synapse structure formation at neuromuscular junctions. Might play a role in maintenance of mitochondrial morphology. This chain is Pyruvate dehydrogenase E1 component subunit beta, mitochondrial, found in Drosophila melanogaster (Fruit fly).